Consider the following 198-residue polypeptide: NAD(P)H quinone oxidoreductase PST1 (198 aa).

Residues 6–192 (VAIIIYSLYH…AIAKQQGEDF (187 aa)) form the Flavodoxin-like domain. Residues 12–16 (SLYHH) and 112–164 (VFVW…SPWG) each bind FMN.

The protein belongs to the WrbA family. The cofactor is FMN.

The protein localises to the cell membrane. The enzyme catalyses a quinone + NADH + H(+) = a quinol + NAD(+). The catalysed reaction is a quinone + NADPH + H(+) = a quinol + NADP(+). Its function is as follows. Flavodoxin-like protein (FLP) that plays a role in cell wall integrity, oxidative stress protection and virulence. FLPs act as NAD(P)H quinone oxidoreductases. Reduces ubiquinone (coenzyme Q), enabling it to serve as an antioxidant in the membrane. This chain is NAD(P)H quinone oxidoreductase PST1, found in Candida albicans (strain SC5314 / ATCC MYA-2876) (Yeast).